The primary structure comprises 183 residues: 3-hydroxydecanoyl-[acyl-carrier-protein] dehydratase (183 aa).

H77 is an active-site residue.

This sequence belongs to the thioester dehydratase family. FabA subfamily. Homodimer.

It localises to the cytoplasm. It catalyses the reaction a (3R)-hydroxyacyl-[ACP] = a (2E)-enoyl-[ACP] + H2O. The enzyme catalyses (3R)-hydroxydecanoyl-[ACP] = (2E)-decenoyl-[ACP] + H2O. The catalysed reaction is (2E)-decenoyl-[ACP] = (3Z)-decenoyl-[ACP]. The protein operates within lipid metabolism; fatty acid biosynthesis. Necessary for the introduction of cis unsaturation into fatty acids. Catalyzes the dehydration of (3R)-3-hydroxydecanoyl-ACP to E-(2)-decenoyl-ACP and then its isomerization to Z-(3)-decenoyl-ACP. Can catalyze the dehydratase reaction for beta-hydroxyacyl-ACPs with saturated chain lengths up to 16:0, being most active on intermediate chain length. This Hahella chejuensis (strain KCTC 2396) protein is 3-hydroxydecanoyl-[acyl-carrier-protein] dehydratase.